A 561-amino-acid chain; its full sequence is 4-coumarate--CoA ligase 3 (561 aa).

Positions 213, 214, 215, 216, 217, and 221 each coordinate ATP. Residues Tyr-263 and Ser-267 each contribute to the (E)-4-coumaroyl-AMP site. Lys-284 contributes to the CoA binding site. Residues 286 to 355 (EIGALLDLIQ…RRLPQAILGQ (70 aa)) are SBD1. Residues Ala-333, Gln-355, Gly-356, Thr-360, and Met-368 each coordinate (E)-4-coumaroyl-AMP. The ATP site is built by Gln-355, Gly-356, and Thr-360. Positions 356 to 423 (GYGMTEAGPV…IRGQQIMKEY (68 aa)) are SBD2. The ATP site is built by Asp-444 and Arg-459. Lys-461 and Lys-465 together coordinate (E)-4-coumaroyl-AMP. Residues Lys-467 and Gly-468 each contribute to the CoA site. ATP is bound at residue Lys-550.

Belongs to the ATP-dependent AMP-binding enzyme family. Requires Mg(2+) as cofactor. As to expression, preferentially expressed in leaves, flowers and siliques.

It carries out the reaction (E)-4-coumarate + ATP + CoA = (E)-4-coumaroyl-CoA + AMP + diphosphate. It catalyses the reaction (E)-caffeate + ATP + CoA = (E)-caffeoyl-CoA + AMP + diphosphate. The enzyme catalyses (E)-ferulate + ATP + CoA = (E)-feruloyl-CoA + AMP + diphosphate. The catalysed reaction is (E)-4-coumarate + ATP + H(+) = (E)-4-coumaroyl-AMP + diphosphate. It carries out the reaction (E)-4-coumaroyl-AMP + CoA = (E)-4-coumaroyl-CoA + AMP + H(+). It catalyses the reaction (E)-caffeate + ATP + H(+) = (E)-caffeoyl-AMP + diphosphate. The enzyme catalyses (E)-caffeoyl-AMP + CoA = (E)-caffeoyl-CoA + AMP + H(+). The catalysed reaction is (E)-ferulate + ATP + H(+) = (E)-feruloyl-AMP + diphosphate. It carries out the reaction (E)-feruloyl-AMP + CoA = (E)-feruloyl-CoA + AMP + H(+). The protein operates within phytoalexin biosynthesis; 3,4',5-trihydroxystilbene biosynthesis; 3,4',5-trihydroxystilbene from trans-4-coumarate: step 1/2. Produces CoA thioesters of a variety of hydroxy- and methoxy-substituted cinnamic acids, which are used to synthesize several phenylpropanoid-derived compounds, including anthocyanins, flavonoids, isoflavonoids, coumarins, lignin, suberin and wall-bound phenolics. Follows a two-step reaction mechanism, wherein the carboxylate substrate first undergoes adenylation by ATP, followed by a thioesterification in the presence of CoA to yield the final CoA thioesters. The protein is 4-coumarate--CoA ligase 3 of Arabidopsis thaliana (Mouse-ear cress).